The sequence spans 216 residues: Ras-related protein Rab-5C (216 aa).

GTP contacts are provided by Ser-30, Ala-31, Gly-33, Lys-34, Ser-35, Ser-36, His-47, Glu-48, Thr-53, and Gly-79. Ser-35 provides a ligand contact to Mg(2+). 2 consecutive short sequence motifs (switch) follow at residues 45–57 (QFHE…IGAA) and 78–94 (AGQE…YRGA). Position 53 (Thr-53) interacts with Mg(2+). Ser-85 carries the post-translational modification Phosphoserine. GTP-binding residues include Asn-134, Lys-135, Asp-137, Ala-165, and Lys-166. The segment at 185-216 (NEPQNAAGAPGRNRGVDLQENNPASRSQCCSN) is disordered. Polar residues predominate over residues 203–216 (QENNPASRSQCCSN). S-geranylgeranyl cysteine attachment occurs at residues Cys-213 and Cys-214.

It belongs to the small GTPase superfamily. Rab family. In terms of assembly, interacts with EEA1 and INCA1. Interacts with GDI1, GDI2, CHML and CHM; phosphorylation at Ser-85 disrupts this interaction. Mg(2+) is required as a cofactor. Phosphorylation of Ser-85 in the switch II region by LRRK2 prevents the association of RAB regulatory proteins, including CHM, CHML and RAB GDP dissociation inhibitors GDI1 and GDI2.

The protein localises to the cell membrane. It localises to the early endosome membrane. Its subcellular location is the melanosome. The enzyme catalyses GTP + H2O = GDP + phosphate + H(+). Regulated by guanine nucleotide exchange factors (GEFs) which promote the exchange of bound GDP for free GTP. Regulated by GTPase activating proteins (GAPs) which increase the GTP hydrolysis activity. Inhibited by GDP dissociation inhibitors (GDIs). The small GTPases Rab are key regulators of intracellular membrane trafficking, from the formation of transport vesicles to their fusion with membranes. Rabs cycle between an inactive GDP-bound form and an active GTP-bound form that is able to recruit to membranes different sets of downstream effectors directly responsible for vesicle formation, movement, tethering and fusion. The chain is Ras-related protein Rab-5C (RAB5C) from Bos taurus (Bovine).